An 854-amino-acid chain; its full sequence is Protein translocase subunit SecA (854 aa).

Residues Gln81, 99–103 (GEGKT), and Asp487 contribute to the ATP site.

It belongs to the SecA family. As to quaternary structure, monomer and homodimer. Part of the essential Sec protein translocation apparatus which comprises SecA, SecYEG and auxiliary proteins SecDF. Other proteins may also be involved.

It localises to the cell membrane. Its subcellular location is the cytoplasm. The enzyme catalyses ATP + H2O + cellular proteinSide 1 = ADP + phosphate + cellular proteinSide 2.. Functionally, part of the Sec protein translocase complex. Interacts with the SecYEG preprotein conducting channel. Has a central role in coupling the hydrolysis of ATP to the transfer of proteins into and across the cell membrane, serving as an ATP-driven molecular motor driving the stepwise translocation of polypeptide chains across the membrane. The sequence is that of Protein translocase subunit SecA from Mycoplasma mobile (strain ATCC 43663 / 163K / NCTC 11711) (Mesomycoplasma mobile).